The chain runs to 293 residues: MPWIQLKLNTTGANAEDLSDALMEAGAVSITFQDTHDTPVFEPLPGETRLWGDTDVIGLFDAETDMNDVVAILENHPLLGAGFAHKIEQLEDKDWEREWMDNFHPMRFGERLWICPSWRDVPDENAVNVMLDPGLAFGTGTHPTTSLCLQWLDSLDLTGKTVIDFGCGSGILAIAALKLGAAKAIGIDIDPQAIQASRNNAERNGVSDRLELYLPKDQPEEMKADVVVANILAGPLRELAPLISVLPVSGGLLGLSGILASQAESVCEAYADSFALDPVVEKEEWCRITGRKN.

Residues threonine 145, glycine 166, aspartate 188, and asparagine 230 each contribute to the S-adenosyl-L-methionine site.

This sequence belongs to the methyltransferase superfamily. PrmA family.

The protein resides in the cytoplasm. It catalyses the reaction L-lysyl-[protein] + 3 S-adenosyl-L-methionine = N(6),N(6),N(6)-trimethyl-L-lysyl-[protein] + 3 S-adenosyl-L-homocysteine + 3 H(+). In terms of biological role, methylates ribosomal protein L11. This chain is Ribosomal protein L11 methyltransferase, found in Escherichia coli (strain 55989 / EAEC).